We begin with the raw amino-acid sequence, 114 residues long: Nucleoid-associated protein MAB_0319 (114 aa).

Belongs to the YbaB/EbfC family. In terms of assembly, homodimer.

It localises to the cytoplasm. It is found in the nucleoid. Functionally, binds to DNA and alters its conformation. May be involved in regulation of gene expression, nucleoid organization and DNA protection. The sequence is that of Nucleoid-associated protein MAB_0319 from Mycobacteroides abscessus (strain ATCC 19977 / DSM 44196 / CCUG 20993 / CIP 104536 / JCM 13569 / NCTC 13031 / TMC 1543 / L948) (Mycobacterium abscessus).